Consider the following 746-residue polypeptide: 1,4-alpha-glucan branching enzyme GlgB (746 aa).

The active-site Nucleophile is the Asp418. The active-site Proton donor is Glu471.

This sequence belongs to the glycosyl hydrolase 13 family. GlgB subfamily. In terms of assembly, monomer.

The enzyme catalyses Transfers a segment of a (1-&gt;4)-alpha-D-glucan chain to a primary hydroxy group in a similar glucan chain.. It participates in glycan biosynthesis; glycogen biosynthesis. Catalyzes the formation of the alpha-1,6-glucosidic linkages in glycogen by scission of a 1,4-alpha-linked oligosaccharide from growing alpha-1,4-glucan chains and the subsequent attachment of the oligosaccharide to the alpha-1,6 position. In Nitrosospira multiformis (strain ATCC 25196 / NCIMB 11849 / C 71), this protein is 1,4-alpha-glucan branching enzyme GlgB.